The following is a 391-amino-acid chain: 8-amino-7-oxononanoate synthase (391 aa).

R20 is a substrate binding site. 106 to 107 (GY) lines the pyridoxal 5'-phosphate pocket. A substrate-binding site is contributed by H131. Residues S178, H206, and T234 each contribute to the pyridoxal 5'-phosphate site. The residue at position 237 (K237) is an N6-(pyridoxal phosphate)lysine. Residue T353 coordinates substrate.

The protein belongs to the class-II pyridoxal-phosphate-dependent aminotransferase family. BioF subfamily. In terms of assembly, homodimer. Pyridoxal 5'-phosphate serves as cofactor.

It carries out the reaction 6-carboxyhexanoyl-[ACP] + L-alanine + H(+) = (8S)-8-amino-7-oxononanoate + holo-[ACP] + CO2. It functions in the pathway cofactor biosynthesis; biotin biosynthesis. Its function is as follows. Catalyzes the decarboxylative condensation of pimeloyl-[acyl-carrier protein] and L-alanine to produce 8-amino-7-oxononanoate (AON), [acyl-carrier protein], and carbon dioxide. This is 8-amino-7-oxononanoate synthase from Trichlorobacter lovleyi (strain ATCC BAA-1151 / DSM 17278 / SZ) (Geobacter lovleyi).